We begin with the raw amino-acid sequence, 299 residues long: Pyridoxal 5'-phosphate synthase subunit PdxS (299 aa).

Residue Asp-24 coordinates D-ribose 5-phosphate. The active-site Schiff-base intermediate with D-ribose 5-phosphate is Lys-81. Gly-153 is a binding site for D-ribose 5-phosphate. D-glyceraldehyde 3-phosphate is bound at residue Arg-165. D-ribose 5-phosphate-binding positions include Gly-219 and 240-241 (GS).

This sequence belongs to the PdxS/SNZ family. As to quaternary structure, in the presence of PdxT, forms a dodecamer of heterodimers.

It catalyses the reaction aldehydo-D-ribose 5-phosphate + D-glyceraldehyde 3-phosphate + L-glutamine = pyridoxal 5'-phosphate + L-glutamate + phosphate + 3 H2O + H(+). The protein operates within cofactor biosynthesis; pyridoxal 5'-phosphate biosynthesis. Functionally, catalyzes the formation of pyridoxal 5'-phosphate from ribose 5-phosphate (RBP), glyceraldehyde 3-phosphate (G3P) and ammonia. The ammonia is provided by the PdxT subunit. Can also use ribulose 5-phosphate and dihydroxyacetone phosphate as substrates, resulting from enzyme-catalyzed isomerization of RBP and G3P, respectively. The protein is Pyridoxal 5'-phosphate synthase subunit PdxS of Methanococcus maripaludis (strain C5 / ATCC BAA-1333).